Reading from the N-terminus, the 271-residue chain is S-adenosylmethionine decarboxylase proenzyme (271 aa).

S121 acts as the Schiff-base intermediate with substrate; via pyruvic acid in catalysis. A Pyruvic acid (Ser); by autocatalysis modification is found at S121. H126 serves as the catalytic Proton acceptor; for processing activity. Catalysis depends on C149, which acts as the Proton donor; for catalytic activity.

The protein belongs to the prokaryotic AdoMetDC family. Type 2 subfamily. In terms of assembly, heterooctamer of four alpha and four beta chains arranged as a tetramer of alpha/beta heterodimers. Pyruvate is required as a cofactor. Post-translationally, is synthesized initially as an inactive proenzyme. Formation of the active enzyme involves a self-maturation process in which the active site pyruvoyl group is generated from an internal serine residue via an autocatalytic post-translational modification. Two non-identical subunits are generated from the proenzyme in this reaction, and the pyruvate is formed at the N-terminus of the alpha chain, which is derived from the carboxyl end of the proenzyme. The post-translation cleavage follows an unusual pathway, termed non-hydrolytic serinolysis, in which the side chain hydroxyl group of the serine supplies its oxygen atom to form the C-terminus of the beta chain, while the remainder of the serine residue undergoes an oxidative deamination to produce ammonia and the pyruvoyl group blocking the N-terminus of the alpha chain.

The catalysed reaction is S-adenosyl-L-methionine + H(+) = S-adenosyl 3-(methylsulfanyl)propylamine + CO2. The protein operates within amine and polyamine biosynthesis; S-adenosylmethioninamine biosynthesis; S-adenosylmethioninamine from S-adenosyl-L-methionine: step 1/1. Its function is as follows. Catalyzes the decarboxylation of S-adenosylmethionine to S-adenosylmethioninamine (dcAdoMet), the propylamine donor required for the synthesis of the polyamines spermine and spermidine from the diamine putrescine. The chain is S-adenosylmethionine decarboxylase proenzyme from Clostridium perfringens (strain ATCC 13124 / DSM 756 / JCM 1290 / NCIMB 6125 / NCTC 8237 / Type A).